Reading from the N-terminus, the 147-residue chain is Augurin (147 aa).

Positions 1-31 are cleaved as a signal peptide; that stretch reads MANSSARPAFLVMTALALLLLLCVGPGGISG. 2 propeptides span residues 32-68 and 132-147; these read NKLK…LRRP and SAHS…YDDY.

Belongs to the augurin family.

The protein localises to the secreted. It localises to the cytoplasm. The protein resides in the apical cell membrane. Functionally, probable hormone that may attenuate cell proliferation and induce senescence of oligodendrocyte and neural precursor cells in the central nervous system. ECRG4-induced senescence is characterized by G1 arrest, RB1 dephosphorylation and accelerated CCND1 and CCND3 proteasomal degradation. This chain is Augurin, found in Bos taurus (Bovine).